Consider the following 285-residue polypeptide: Nucleotide-binding protein NTHI1314 (285 aa).

ATP is bound at residue 8-15 (GRSGAGKS). 56–59 (DIRN) serves as a coordination point for GTP.

This sequence belongs to the RapZ-like family.

In terms of biological role, displays ATPase and GTPase activities. The polypeptide is Nucleotide-binding protein NTHI1314 (Haemophilus influenzae (strain 86-028NP)).